Here is a 67-residue protein sequence, read N- to C-terminus: MPQLDTTPWFITILSMIITLFILFQSNMSKYLYPLEPQPKTLKTQLYNAPWETKWTKIYLPHSLHLH.

A helical transmembrane segment spans residues 8-24 (PWFITILSMIITLFILF). Residue K54 is modified to N6-acetyllysine; alternate. Position 54 is an N6-succinyllysine; alternate (K54). At K57 the chain carries N6-acetyllysine.

The protein belongs to the ATPase protein 8 family. Component of the ATP synthase complex composed at least of ATP5F1A/subunit alpha, ATP5F1B/subunit beta, ATP5MC1/subunit c (homooctomer), MT-ATP6/subunit a, MT-ATP8/subunit 8, ATP5ME/subunit e, ATP5MF/subunit f, ATP5MG/subunit g, ATP5MK/subunit k, ATP5MJ/subunit j, ATP5F1C/subunit gamma, ATP5F1D/subunit delta, ATP5F1E/subunit epsilon, ATP5PF/subunit F6, ATP5PB/subunit b, ATP5PD/subunit d, ATP5PO/subunit OSCP. ATP synthase complex consists of a soluble F(1) head domain (subunits alpha(3) and beta(3)) - the catalytic core - and a membrane F(0) domain - the membrane proton channel (subunits c, a, 8, e, f, g, k and j). These two domains are linked by a central stalk (subunits gamma, delta, and epsilon) rotating inside the F1 region and a stationary peripheral stalk (subunits F6, b, d, and OSCP). Interacts with PRICKLE3.

It is found in the mitochondrion membrane. Its function is as follows. Subunit 8, of the mitochondrial membrane ATP synthase complex (F(1)F(0) ATP synthase or Complex V) that produces ATP from ADP in the presence of a proton gradient across the membrane which is generated by electron transport complexes of the respiratory chain. ATP synthase complex consist of a soluble F(1) head domain - the catalytic core - and a membrane F(1) domain - the membrane proton channel. These two domains are linked by a central stalk rotating inside the F(1) region and a stationary peripheral stalk. During catalysis, ATP synthesis in the catalytic domain of F(1) is coupled via a rotary mechanism of the central stalk subunits to proton translocation. In vivo, can only synthesize ATP although its ATP hydrolase activity can be activated artificially in vitro. Part of the complex F(0) domain. The protein is ATP synthase F(0) complex subunit 8 of Orycteropus afer (Aardvark).